Reading from the N-terminus, the 251-residue chain is MIVELDCGNSFIKWRIIDAFSRVLSSGVVESIEELVHALDEARTSHEFAHCRMVSVRSDDEVARLESVLAQRFGLRVSAVRPASCLAGVRNGYLNHERLGLDRWMAVVAAYRLSAGACLVLDLGTAVTADFVDADGEHRGGFICPGLPLLRRQLREHTRRIHYDAVAANDLTGGSFAPGRSTAEAVERGCVLMLRGFVASQLELAKEYWGDRFEIFLTGGDASLVADVLPRAKVVPDLIFTGLAIACPIPS.

6-13 (DCGNSFIK) contacts ATP. Residues Tyr93 and 100 to 103 (GLDR) contribute to the substrate site. Catalysis depends on Asp102, which acts as the Proton acceptor. Asp122 is a K(+) binding site. An ATP-binding site is contributed by Thr125. Thr182 provides a ligand contact to substrate.

This sequence belongs to the type III pantothenate kinase family. Homodimer. NH4(+) is required as a cofactor. It depends on K(+) as a cofactor.

It localises to the cytoplasm. The enzyme catalyses (R)-pantothenate + ATP = (R)-4'-phosphopantothenate + ADP + H(+). The protein operates within cofactor biosynthesis; coenzyme A biosynthesis; CoA from (R)-pantothenate: step 1/5. Functionally, catalyzes the phosphorylation of pantothenate (Pan), the first step in CoA biosynthesis. In Azotobacter vinelandii (strain DJ / ATCC BAA-1303), this protein is Type III pantothenate kinase.